The primary structure comprises 56 residues: uncharacterized protein (56 aa).

This is an uncharacterized protein from Escherichia coli (strain K12).